Consider the following 82-residue polypeptide: Small ribosomal subunit protein bS16 (82 aa).

Belongs to the bacterial ribosomal protein bS16 family.

The protein is Small ribosomal subunit protein bS16 of Vibrio cholerae serotype O1 (strain ATCC 39541 / Classical Ogawa 395 / O395).